The chain runs to 242 residues: Ribonuclease PH (242 aa).

Residues arginine 89 and 127-129 (GTR) each bind phosphate.

The protein belongs to the RNase PH family. As to quaternary structure, homohexameric ring arranged as a trimer of dimers.

It catalyses the reaction tRNA(n+1) + phosphate = tRNA(n) + a ribonucleoside 5'-diphosphate. Its function is as follows. Phosphorolytic 3'-5' exoribonuclease that plays an important role in tRNA 3'-end maturation. Removes nucleotide residues following the 3'-CCA terminus of tRNAs; can also add nucleotides to the ends of RNA molecules by using nucleoside diphosphates as substrates, but this may not be physiologically important. Probably plays a role in initiation of 16S rRNA degradation (leading to ribosome degradation) during starvation. This chain is Ribonuclease PH, found in Neisseria meningitidis serogroup A / serotype 4A (strain DSM 15465 / Z2491).